The primary structure comprises 318 residues: Retinol dehydrogenase 5 (318 aa).

The helical transmembrane segment at methionine 1–arginine 21 threads the bilayer. The Lumenal portion of the chain corresponds to glutamine 22–lysine 288. Position 32–56 (phenylalanine 32–leucine 56) interacts with NADP(+). Residue asparagine 160 is glycosylated (N-linked (GlcNAc...) asparagine). A substrate-binding site is contributed by serine 163. Tyrosine 175 functions as the Proton acceptor in the catalytic mechanism. The helical transmembrane segment at leucine 289–valine 309 threads the bilayer. Residues leucine 310 to tyrosine 318 lie on the Cytoplasmic side of the membrane.

It belongs to the short-chain dehydrogenases/reductases (SDR) family. In terms of assembly, homodimer. As to expression, widely expressed. In the eye, abundant in the retinal pigment epithelium.

The protein localises to the endoplasmic reticulum membrane. The catalysed reaction is 11-cis-retinol + NAD(+) = 11-cis-retinal + NADH + H(+). It carries out the reaction 9-cis-retinol + NAD(+) = 9-cis-retinal + NADH + H(+). The enzyme catalyses 13-cis-retinol + NAD(+) = 13-cis-retinal + NADH + H(+). It catalyses the reaction androsterone + NAD(+) = 5alpha-androstan-3,17-dione + NADH + H(+). The catalysed reaction is 5alpha-androstane-3alpha,17beta-diol + NAD(+) = 17beta-hydroxy-5alpha-androstan-3-one + NADH + H(+). It functions in the pathway cofactor metabolism; retinol metabolism. With respect to regulation, inhibited by 9-cis-, 13-cis- and all-trans-retinoic acids, with the most potent inhibitor being 13-cis-retinoic acid. Weakly inhibited by oleic acid. Functionally, catalyzes the oxidation of cis-isomers of retinol, including 11-cis-, 9-cis-, and 13-cis-retinol in an NAD-dependent manner. Has no activity towards all-trans retinal. Plays a significant role in 11-cis retinol oxidation in the retinal pigment epithelium cells (RPE). Also recognizes steroids (androsterone, androstanediol) as its substrates. The protein is Retinol dehydrogenase 5 of Homo sapiens (Human).